Here is a 187-residue protein sequence, read N- to C-terminus: Elongation factor P (187 aa).

This sequence belongs to the elongation factor P family.

The protein localises to the cytoplasm. It functions in the pathway protein biosynthesis; polypeptide chain elongation. Its function is as follows. Involved in peptide bond synthesis. Stimulates efficient translation and peptide-bond synthesis on native or reconstituted 70S ribosomes in vitro. Probably functions indirectly by altering the affinity of the ribosome for aminoacyl-tRNA, thus increasing their reactivity as acceptors for peptidyl transferase. The chain is Elongation factor P from Corynebacterium urealyticum (strain ATCC 43042 / DSM 7109).